Here is a 419-residue protein sequence, read N- to C-terminus: Gamma-glutamyl phosphate reductase (419 aa).

The protein belongs to the gamma-glutamyl phosphate reductase family.

It is found in the cytoplasm. The enzyme catalyses L-glutamate 5-semialdehyde + phosphate + NADP(+) = L-glutamyl 5-phosphate + NADPH + H(+). Its pathway is amino-acid biosynthesis; L-proline biosynthesis; L-glutamate 5-semialdehyde from L-glutamate: step 2/2. In terms of biological role, catalyzes the NADPH-dependent reduction of L-glutamate 5-phosphate into L-glutamate 5-semialdehyde and phosphate. The product spontaneously undergoes cyclization to form 1-pyrroline-5-carboxylate. This is Gamma-glutamyl phosphate reductase from Yersinia pestis.